A 631-amino-acid polypeptide reads, in one-letter code: Cyclic nucleotide-gated channel alpha-3 (631 aa).

Polar residues predominate over residues 1–18 (MAKVNTQCSQPSPTQLSI). Disordered stretches follow at residues 1 to 21 (MAKV…IKNA) and 71 to 98 (EVST…RKEE). Over 1-111 (MAKVNTQCSQ…VDPSSNIYYR (111 aa)) the chain is Cytoplasmic. Positions 87–98 (KPPDGGEGRKEE) are enriched in basic and acidic residues. The chain crosses the membrane as a helical span at residues 112-133 (WLTAIALPVFYNWCLLVCRACF). The Extracellular portion of the chain corresponds to 134 to 139 (DELQSE). The chain crosses the membrane as a helical span at residues 140-160 (HLTLWLVLDYSADVLYVLDML). The Cytoplasmic portion of the chain corresponds to 161 to 187 (VRARTGFLEQGLMVRDTKRLWKHYTKT). The helical transmembrane segment at 188–207 (LHFKLDILSLIPTDLAYLKL) threads the bilayer. Residues 208–211 (GVNY) lie on the Extracellular side of the membrane. The helical transmembrane segment at 212–229 (PELRFNRLLKFSRLFEFF) threads the bilayer. Topologically, residues 230 to 239 (DRTETRTNYP) are cytoplasmic. Residues 239-347 (PNVFRIGNLV…GNVGSMISNM (109 aa)) are ion conduction pathway. Residues 240–262 (NVFRIGNLVLYTLIIIHWNACIY) traverse the membrane as a helical segment. At 263–288 (FAISKFIGFGTDSWVYPNTSKPEYAR) the chain is on the extracellular side. A glycan (N-linked (GalNAc...) asparagine) is linked at N280. Helical transmembrane passes span 289–319 (LSRK…DEEY) and 320–344 (LFVV…GSMI). Residues 306 to 309 (TIGE) are selectivity filter. Topologically, residues 345–631 (SNMNAPRVEF…ENSEDASKTD (287 aa)) are cytoplasmic. Residues 349–426 (APRVEFQAKI…TLKKVRIFQD (78 aa)) form a C-linker region. Positions 429–549 (AGLLVELVLK…EEKGRQILMK (121 aa)) are cyclic nucleotide-binding domain. The 3',5'-cyclic GMP site is built by G489, E490, S492, R505, T506, and D550. Residues 567–610 (VEEKVEYLESSLDILQTRFARLLAEYSASQMKLKQRLTRLESQM) adopt a coiled-coil conformation.

Belongs to the cyclic nucleotide-gated cation channel (TC 1.A.1.5) family. CNGA3 subfamily. In terms of assembly, forms heterotetrameric channels composed of CNGA3 and CNGB3 subunits with 3:1 stoichiometry. As to expression, prominently expressed in retina.

The protein localises to the cell membrane. The enzyme catalyses Ca(2+)(in) = Ca(2+)(out). It catalyses the reaction Na(+)(in) = Na(+)(out). The catalysed reaction is K(+)(in) = K(+)(out). It carries out the reaction NH4(+)(in) = NH4(+)(out). The enzyme catalyses Rb(+)(in) = Rb(+)(out). It catalyses the reaction Li(+)(in) = Li(+)(out). The catalysed reaction is Cs(+)(in) = Cs(+)(out). Pore-forming subunit of the cone cyclic nucleotide-gated channel. Mediates cone photoresponses at bright light converting transient changes in intracellular cGMP levels into electrical signals. In the dark, cGMP levels are high and keep the channel open enabling a steady inward current carried by Na(+) and Ca(2+) ions that leads to membrane depolarization and neurotransmitter release from synaptic terminals. Upon photon absorption cGMP levels decline leading to channel closure and membrane hyperpolarization that ultimately slows neurotransmitter release and signals the presence of light, the end point of the phototransduction cascade. Pore-forming subunit of the gustatory cyclic nucleotide-gated channel. In the taste buds, may sense oral extracellular pH and conduct ion currents that modulate the excitability of taste cells. Conducts cGMP- and cAMP-gated ion currents, with permeability for monovalent and divalent cations. This Mus musculus (Mouse) protein is Cyclic nucleotide-gated channel alpha-3.